The following is a 429-amino-acid chain: ATP-dependent RNA helicase RhlB (429 aa).

Positions 9 to 37 (EKFAQMGLEPEVLAGLESKGFHYCTPIQA) match the Q motif motif. The 180-residue stretch at 40–219 (LPLLVEGHDL…YEHMNHPEHV (180 aa)) folds into the Helicase ATP-binding domain. 53–60 (AQTGTGKT) is a binding site for ATP. The DEAD box motif lies at 165-168 (DEAD). One can recognise a Helicase C-terminal domain in the interval 243-390 (KMLLLLSLME…VSKYDREALL (148 aa)). The disordered stretch occupies residues 395–429 (APKRVVRNRQPVNRNMRDRQGGGNSNNRRRPPRKS).

It belongs to the DEAD box helicase family. RhlB subfamily. Component of the RNA degradosome, which is a multiprotein complex involved in RNA processing and mRNA degradation.

It localises to the cytoplasm. It catalyses the reaction ATP + H2O = ADP + phosphate + H(+). Its function is as follows. DEAD-box RNA helicase involved in RNA degradation. Has RNA-dependent ATPase activity and unwinds double-stranded RNA. The protein is ATP-dependent RNA helicase RhlB of Aeromonas salmonicida (strain A449).